A 557-amino-acid polypeptide reads, in one-letter code: NADP-dependent malic enzyme (557 aa).

Tyrosine 91 serves as the catalytic Proton donor. Arginine 144 contributes to the NADP(+) binding site. Substrate-binding residues include arginine 144 and lysine 162. Lysine 162 (proton acceptor) is an active-site residue. Glutamate 234 and aspartate 235 together coordinate Mn(2+). Asparagine 238 contributes to the NADP(+) binding site. Aspartate 258 contacts Mn(2+). NADP(+) contacts are provided by residues 291–294, serine 325, asparagine 397, and asparagine 443; that span reads AGEA. Position 443 (asparagine 443) interacts with substrate.

Belongs to the malic enzymes family. As to quaternary structure, homotetramer. Mg(2+) is required as a cofactor. It depends on Mn(2+) as a cofactor. In terms of processing, the N-terminus is blocked.

The protein resides in the cytoplasm. It carries out the reaction (S)-malate + NADP(+) = pyruvate + CO2 + NADPH. The catalysed reaction is oxaloacetate + H(+) = pyruvate + CO2. The polypeptide is NADP-dependent malic enzyme (ME1) (Columba livia (Rock dove)).